The following is a 358-amino-acid chain: UPF0575 protein C19orf67 (358 aa).

Positions 1-84 (MATEQWFEGS…PGPAPPRLSL (84 aa)) are disordered. 2 stretches are compositionally biased toward pro residues: residues 17 to 32 (ETPP…PPCG) and 70 to 80 (PLVPRPGPAPP).

The protein belongs to the UPF0575 family.

The sequence is that of UPF0575 protein C19orf67 (C19orf67) from Homo sapiens (Human).